Here is a 344-residue protein sequence, read N- to C-terminus: Dihydroorotase (344 aa).

Residues H14 and H16 each coordinate Zn(2+). Substrate contacts are provided by residues 16–18 (HLR) and N42. Residues K100, H137, and H175 each coordinate Zn(2+). K100 carries the post-translational modification N6-carboxylysine. H137 provides a ligand contact to substrate. Residue L220 participates in substrate binding. A Zn(2+)-binding site is contributed by D248. D248 is a catalytic residue. Substrate is bound by residues H252 and A264.

Belongs to the metallo-dependent hydrolases superfamily. DHOase family. Class II DHOase subfamily. In terms of assembly, homodimer. Zn(2+) is required as a cofactor.

It catalyses the reaction (S)-dihydroorotate + H2O = N-carbamoyl-L-aspartate + H(+). The protein operates within pyrimidine metabolism; UMP biosynthesis via de novo pathway; (S)-dihydroorotate from bicarbonate: step 3/3. In terms of biological role, catalyzes the reversible cyclization of carbamoyl aspartate to dihydroorotate. The chain is Dihydroorotase from Ralstonia nicotianae (strain ATCC BAA-1114 / GMI1000) (Ralstonia solanacearum).